A 728-amino-acid chain; its full sequence is 1,4-alpha-glucan branching enzyme GlgB (728 aa).

The Nucleophile role is filled by Asp-405. Glu-458 serves as the catalytic Proton donor.

Belongs to the glycosyl hydrolase 13 family. GlgB subfamily. In terms of assembly, monomer.

The catalysed reaction is Transfers a segment of a (1-&gt;4)-alpha-D-glucan chain to a primary hydroxy group in a similar glucan chain.. It participates in glycan biosynthesis; glycogen biosynthesis. Its function is as follows. Catalyzes the formation of the alpha-1,6-glucosidic linkages in glycogen by scission of a 1,4-alpha-linked oligosaccharide from growing alpha-1,4-glucan chains and the subsequent attachment of the oligosaccharide to the alpha-1,6 position. The polypeptide is 1,4-alpha-glucan branching enzyme GlgB (Citrobacter koseri (strain ATCC BAA-895 / CDC 4225-83 / SGSC4696)).